A 327-amino-acid chain; its full sequence is MQSFNRINSMKYFPLSNGEQIPALGLGTWKSSPQVVGQAVEQALDLGYRHLDCAAIYGNEAEIGATLANAFTKGVVKREELWITSKLWSNAHHPDAVLPALEKTLQDLGLDYLDLYLIHWPVVIQPDVGFPESGDQLLPFTPASLEGTWQALEKAVDLGLCHHIGVSNFSLKKLEMVLSMARIPPAVNQVELHPYLQQSDLLTFANSQNILLTAYSPLGSGDRPAAFQQAAEPKLLTDPVINGIAAEQGCSAAQVLLAWAIQRGTVTIPKSVNPERLEQNLRAADITLTDSEMAKIALLDRHYRYVSGDFWTMPGSPYTLQNLWDEI.

NADP(+) is bound at residue 18 to 27; that stretch reads GEQIPALGLG. The active-site Proton donor is Tyr57. Position 119 (His119) interacts with substrate. 216-280 contributes to the NADP(+) binding site; it reads SPLGSGDRPA…SVNPERLEQN (65 aa).

The protein belongs to the aldo/keto reductase family. Monomer.

It catalyses the reaction a secondary alcohol + NADP(+) = a ketone + NADPH + H(+). Its activity is regulated as follows. Curcumin non-competitively inhibits the enzyme with respect to furfural. To a lesser extent, enzyme activity is also inhibited by indomethacin, coumarate, coumarin, and alrestatin. Functionally, aldo/keto reductase with broad substrate spectrum. Catalyzes the NADPH-dependent reduction of aldehyde- and ketone-groups of different classes of carbonyl compounds to the corresponding alcohols. Highest enzymatic efficiency is observed with 4-oxonon-2-enal (4-ONE) and 4-hydroxynon-2-enal (4-HNE), that are lipid peroxidation products, and 9,10-phenanthrenequinone (9,10-PQ), a photoproduct of phenanthrene that is one of the most prevalent polycyclic aromatic hydrocarbons in the environment. Is also active on sugar-derived reactive carbonyls such as methylglyoxal (MG), glyoxal and 3-deoxyglucosone (3-DG), and on other lipid-derived carbonyls such as acrolein. May be involved in the detoxification of the toxic lipid peroxidation products 4-ONE and 4-HNE besides many other exo- and endogenic reactive carbonyl compounds (RCs) that may lead to photoinhibition or other cell damages. In Synechocystis sp. (strain ATCC 27184 / PCC 6803 / Kazusa), this protein is Aldo/keto reductase slr0942.